Reading from the N-terminus, the 764-residue chain is Subtilisin-like protease SBT1.6 (764 aa).

A signal peptide spans 1-20 (MASSTIVLLLFLSFPFISFA). One can recognise an Inhibitor I9 domain in the interval 46 to 99 (HWYSTEFAEESRIVHVYHTVFHGFSAVVTPDEADNLRNHPAVLAVFEDRRRELH). A Peptidase S8 domain is found at 103–606 (SPQFLGLQNQ…SGHLNLGRAM (504 aa)). D131 acts as the Charge relay system in catalysis. N191 carries N-linked (GlcNAc...) asparagine glycosylation. H205 (charge relay system) is an active-site residue. Residues 377 to 457 (SSASLCMENT…NEGDRIKAYA (81 aa)) enclose the PA domain. Catalysis depends on S538, which acts as the Charge relay system. N-linked (GlcNAc...) asparagine glycosylation is present at N578.

Belongs to the peptidase S8 family. Expressed in roots, leaves and flowers of mature plants.

The chain is Subtilisin-like protease SBT1.6 from Arabidopsis thaliana (Mouse-ear cress).